The primary structure comprises 255 residues: Proteasome subunit alpha (255 aa).

It belongs to the peptidase T1A family. In terms of assembly, the 20S proteasome core is composed of 14 alpha and 14 beta subunits that assemble into four stacked heptameric rings, resulting in a barrel-shaped structure. The two inner rings, each composed of seven catalytic beta subunits, are sandwiched by two outer rings, each composed of seven alpha subunits. The catalytic chamber with the active sites is on the inside of the barrel. Has a gated structure, the ends of the cylinder being occluded by the N-termini of the alpha-subunits. Is capped at one or both ends by the proteasome regulatory ATPase, PAN.

Its subcellular location is the cytoplasm. With respect to regulation, the formation of the proteasomal ATPase PAN-20S proteasome complex, via the docking of the C-termini of PAN into the intersubunit pockets in the alpha-rings, triggers opening of the gate for substrate entry. Interconversion between the open-gate and close-gate conformations leads to a dynamic regulation of the 20S proteasome proteolysis activity. Its function is as follows. Component of the proteasome core, a large protease complex with broad specificity involved in protein degradation. This Natronomonas pharaonis (strain ATCC 35678 / DSM 2160 / CIP 103997 / JCM 8858 / NBRC 14720 / NCIMB 2260 / Gabara) (Halobacterium pharaonis) protein is Proteasome subunit alpha.